Here is an 87-residue protein sequence, read N- to C-terminus: Acyl-CoA-binding protein (87 aa).

Position 2 is an N-acetylserine (Ser2). In terms of domain architecture, ACB spans 2–87 (SQADFDKAAE…VEELKKKYGI (86 aa)). Lys8 carries the N6-acetyllysine; alternate modification. An N6-succinyllysine; alternate modification is found at Lys8. Lys14 serves as a coordination point for an acyl-CoA. Lys17 bears the N6-succinyllysine mark. Tyr29 carries the post-translational modification Phosphotyrosine. An acyl-CoA contacts are provided by residues 29–33 (YSHFK), Lys51, Lys55, and Tyr74. Lys51 is subject to N6-acetyllysine. Residue Lys55 is modified to N6-acetyllysine; alternate. Lys55 is subject to N6-succinyllysine; alternate. Lys55 is modified (N6-(2-hydroxyisobutyryl)lysine; alternate). Lys55 bears the N6-malonyllysine; alternate mark. An N6-acetyllysine; alternate modification is found at Lys77. Lys77 is modified (N6-succinyllysine; alternate).

It belongs to the ACBP family. Monomer.

It is found in the endoplasmic reticulum. Its subcellular location is the golgi apparatus. Binds medium- and long-chain acyl-CoA esters with very high affinity and may function as an intracellular carrier of acyl-CoA esters. It is also able to displace diazepam from the benzodiazepine (BZD) recognition site located on the GABA type A receptor. It is therefore possible that this protein also acts as a neuropeptide to modulate the action of the GABA receptor. This Rattus norvegicus (Rat) protein is Acyl-CoA-binding protein (Dbi).